The chain runs to 284 residues: 2-dehydro-3-deoxyphosphooctonate aldolase (284 aa).

It belongs to the KdsA family.

The protein resides in the cytoplasm. The enzyme catalyses D-arabinose 5-phosphate + phosphoenolpyruvate + H2O = 3-deoxy-alpha-D-manno-2-octulosonate-8-phosphate + phosphate. It participates in carbohydrate biosynthesis; 3-deoxy-D-manno-octulosonate biosynthesis; 3-deoxy-D-manno-octulosonate from D-ribulose 5-phosphate: step 2/3. It functions in the pathway bacterial outer membrane biogenesis; lipopolysaccharide biosynthesis. This Burkholderia vietnamiensis (strain G4 / LMG 22486) (Burkholderia cepacia (strain R1808)) protein is 2-dehydro-3-deoxyphosphooctonate aldolase.